The sequence spans 1001 residues: Sarcoplasmic/endoplasmic reticulum calcium ATPase 1 (1001 aa).

4 helical membrane-spanning segments follow: residues leucine 49–alanine 69, glutamate 90–arginine 110, aspartate 254–leucine 273, and phenylalanine 296–alanine 313. Ca(2+) contacts are provided by valine 304, alanine 305, isoleucine 307, and glutamate 309. Residue aspartate 351 is the 4-aspartylphosphate intermediate of the active site. Mg(2+)-binding residues include aspartate 351 and threonine 353. Threonine 353 is an ATP binding site. The residue at position 441 (threonine 441) is a Phosphothreonine. Residues glutamate 442, arginine 489, lysine 515, and arginine 560 each contribute to the ATP site. A Phosphothreonine modification is found at threonine 569. Phosphoserine is present on serine 581. Positions 625, 626, 627, 678, and 684 each coordinate ATP. Aspartate 703 serves as a coordination point for Mg(2+). Asparagine 706 contacts ATP. 3 helical membrane-spanning segments follow: residues lysine 758–leucine 777, isoleucine 788–glycine 808, and isoleucine 829–alanine 851. Ca(2+) contacts are provided by asparagine 768, glutamate 771, asparagine 796, threonine 799, and aspartate 800. The interval isoleucine 788–glycine 808 is interaction with PLN. A disulfide bridge links cysteine 876 with cysteine 888. 3 helical membrane passes run threonine 898 to serine 917, isoleucine 931 to tyrosine 949, and threonine 965 to lysine 985. Glutamate 908 serves as a coordination point for Ca(2+). The tract at residues tryptophan 932–leucine 943 is interaction with PLN.

Belongs to the cation transport ATPase (P-type) (TC 3.A.3) family. Type IIA subfamily. As to quaternary structure, interacts with sarcolipin (SLN). Interacts with phospholamban (PLN). Interacts with myoregulin (MRLN). Interacts with DWORF. Interacts with VMP1. Mg(2+) serves as cofactor. In terms of tissue distribution, skeletal muscle, fast twitch muscle (type II) fibers.

It localises to the endoplasmic reticulum membrane. The protein localises to the sarcoplasmic reticulum membrane. The catalysed reaction is Ca(2+)(in) + ATP + H2O = Ca(2+)(out) + ADP + phosphate + H(+). Inhibited by sarcolipin (SLN) and myoregulin (MRLN). Has also been shown to be reversibly inhibited by phospholamban (PLN) at low calcium concentrations in vitro. Dephosphorylated PLN decreases the apparent affinity of the ATPase for calcium and this inhibition is regulated by the phosphorylation of PLN in vitro. Enhanced by DWORF; DWORF increases activity by displacing sarcolipin (SLN), phospholamban (PLN) and myoregulin (MRLN). In terms of biological role, key regulator of striated muscle performance by acting as the major Ca(2+) ATPase responsible for the reuptake of cytosolic Ca(2+) into the sarcoplasmic reticulum. Catalyzes the hydrolysis of ATP coupled with the translocation of calcium from the cytosol to the sarcoplasmic reticulum lumen. Contributes to calcium sequestration involved in muscular excitation/contraction. This chain is Sarcoplasmic/endoplasmic reticulum calcium ATPase 1, found in Homo sapiens (Human).